The chain runs to 59 residues: Embryonic testis differentiation protein homolog A (59 aa).

Over residues 1 to 10 the composition is skewed to basic and acidic residues; the sequence is MDKEVPKGSP. The interval 1 to 25 is disordered; sequence MDKEVPKGSPREPALNIKKSDKSFK.

This is Embryonic testis differentiation protein homolog A from Homo sapiens (Human).